Reading from the N-terminus, the 363-residue chain is Outer membrane porin F (363 aa).

A signal peptide spans 1 to 22 (MMKRKILAAVIPALLAAATANA).

It belongs to the Gram-negative porin family. As to quaternary structure, homotrimer. Forms mixed heterotrimers with OmpC and with PhoE; other mixed heterotrimers with other porins are also probable.

It localises to the cell outer membrane. In terms of biological role, forms pores that allow passive diffusion of small molecules across the outer membrane. The chain is Outer membrane porin F from Salmonella typhimurium (strain SL1344).